Here is a 728-residue protein sequence, read N- to C-terminus: Catalase-peroxidase 1 (728 aa).

The tryptophyl-tyrosyl-methioninium (Trp-Tyr) (with M-244) cross-link spans 91 to 218 (WHSAGTYRIA…LAAVQMGLIY (128 aa)). The Proton acceptor role is filled by H92. A cross-link (tryptophyl-tyrosyl-methioninium (Tyr-Met) (with W-91)) is located at residues 218-244 (YVNPEGPDGNPDPVAAARDIRDTFARM). Heme b is bound at residue H259.

Belongs to the peroxidase family. Peroxidase/catalase subfamily. In terms of assembly, homodimer or homotetramer. It depends on heme b as a cofactor. Formation of the three residue Trp-Tyr-Met cross-link is important for the catalase, but not the peroxidase activity of the enzyme.

The enzyme catalyses H2O2 + AH2 = A + 2 H2O. It catalyses the reaction 2 H2O2 = O2 + 2 H2O. Functionally, bifunctional enzyme with both catalase and broad-spectrum peroxidase activity. This is Catalase-peroxidase 1 from Burkholderia ambifaria (strain ATCC BAA-244 / DSM 16087 / CCUG 44356 / LMG 19182 / AMMD) (Burkholderia cepacia (strain AMMD)).